The chain runs to 100 residues: UPF0213 protein YhbQ (100 aa).

The region spanning 2 to 77 (TPWFLYLIRT…KQLTKRQKER (76 aa)) is the GIY-YIG domain.

The protein belongs to the UPF0213 family.

This Escherichia coli O127:H6 (strain E2348/69 / EPEC) protein is UPF0213 protein YhbQ.